The chain runs to 901 residues: HTH-type transcriptional regulator MalT (901 aa).

Residue serine 39–threonine 46 coordinates ATP. Positions glutamate 829–leucine 894 constitute an HTH luxR-type domain. Residues asparagine 853–arginine 872 constitute a DNA-binding region (H-T-H motif).

This sequence belongs to the MalT family. Monomer in solution. Oligomerizes to an active state in the presence of the positive effectors ATP and maltotriose.

Activated by ATP and maltotriose, which are both required for DNA binding. Functionally, positively regulates the transcription of the maltose regulon whose gene products are responsible for uptake and catabolism of malto-oligosaccharides. Specifically binds to the promoter region of its target genes, recognizing a short DNA motif called the MalT box. The chain is HTH-type transcriptional regulator MalT from Shigella boydii serotype 4 (strain Sb227).